A 510-amino-acid chain; its full sequence is 2,3-bisphosphoglycerate-independent phosphoglycerate mutase (510 aa).

D12 and S62 together coordinate Mn(2+). S62 serves as the catalytic Phosphoserine intermediate. Substrate is bound by residues H123, 153 to 154, R185, R191, 260 to 263, and K335; these read RD and RPDR. Mn(2+) contacts are provided by D402, H406, D443, H444, and H461.

It belongs to the BPG-independent phosphoglycerate mutase family. Monomer. Mn(2+) serves as cofactor.

The enzyme catalyses (2R)-2-phosphoglycerate = (2R)-3-phosphoglycerate. The protein operates within carbohydrate degradation; glycolysis; pyruvate from D-glyceraldehyde 3-phosphate: step 3/5. Functionally, catalyzes the interconversion of 2-phosphoglycerate and 3-phosphoglycerate. The protein is 2,3-bisphosphoglycerate-independent phosphoglycerate mutase of Listeria monocytogenes serovar 1/2a (strain ATCC BAA-679 / EGD-e).